The following is a 159-amino-acid chain: MQLFFLCAALVIVLDQFTKQLAITHLMPNEESLVLIAEWLKLTYTENTGIAFGLSLGSPMILIVSTTLILAALFLYVVFSKNRNPGFLITFGLILGGGIGNGIDRILSGRVVDFIHVDIYQGYLFGSWVSLWPVFNIADSAITIGACVLVIWYNRFFTR.

The next 2 membrane-spanning stretches (helical) occupy residues 59–79 (PMIL…YVVF) and 87–107 (FLIT…DRIL). Residues Asp113 and Asp139 contribute to the active site. Residues 131 to 151 (LWPVFNIADSAITIGACVLVI) traverse the membrane as a helical segment.

Belongs to the peptidase A8 family.

It is found in the cell inner membrane. It catalyses the reaction Release of signal peptides from bacterial membrane prolipoproteins. Hydrolyzes -Xaa-Yaa-Zaa-|-(S,diacylglyceryl)Cys-, in which Xaa is hydrophobic (preferably Leu), and Yaa (Ala or Ser) and Zaa (Gly or Ala) have small, neutral side chains.. The protein operates within protein modification; lipoprotein biosynthesis (signal peptide cleavage). Its function is as follows. This protein specifically catalyzes the removal of signal peptides from prolipoproteins. The chain is Lipoprotein signal peptidase from Chlorobium phaeobacteroides (strain BS1).